The primary structure comprises 150 residues: Large ribosomal subunit protein uL13 (150 aa).

The segment at 128 to 150 (GSDHPHSAQEPKILSLNSESVTK) is disordered.

This sequence belongs to the universal ribosomal protein uL13 family. In terms of assembly, part of the 50S ribosomal subunit.

Functionally, this protein is one of the early assembly proteins of the 50S ribosomal subunit, although it is not seen to bind rRNA by itself. It is important during the early stages of 50S assembly. The protein is Large ribosomal subunit protein uL13 of Prochlorococcus marinus (strain NATL1A).